Reading from the N-terminus, the 60-residue chain is Large ribosomal subunit protein bL32 (60 aa).

The segment at 1 to 60 (MAVQQVKKSRSKRDMRRSHDSLTNPTLSTDKSTGELHLRHHVSPNGFYKGRKVVDTKSED) is disordered. Over residues 7–16 (KKSRSKRDMR) the composition is skewed to basic residues. A compositionally biased stretch (polar residues) spans 22-31 (LTNPTLSTDK).

Belongs to the bacterial ribosomal protein bL32 family.

This chain is Large ribosomal subunit protein bL32, found in Francisella tularensis subsp. holarctica (strain LVS).